A 24-amino-acid polypeptide reads, in one-letter code: MKAIAVLKGXSEVTGVVRFEQQED.

It belongs to the Cu-Zn superoxide dismutase family. In terms of assembly, homodimer. It depends on Cu cation as a cofactor. Zn(2+) is required as a cofactor.

The protein localises to the cytoplasm. It carries out the reaction 2 superoxide + 2 H(+) = H2O2 + O2. In terms of biological role, destroys radicals which are normally produced within the cells and which are toxic to biological systems. In Aquarana catesbeiana (American bullfrog), this protein is Superoxide dismutase [Cu-Zn] (sod1).